Consider the following 793-residue polypeptide: Outer membrane protein assembly factor BamA (793 aa).

The signal sequence occupies residues 1-19 (MKKLLIASLLFGTTTTVFA). POTRA domains lie at 22 to 89 (FVAK…VVAK), 90 to 170 (SIIS…INED), 173 to 259 (AKLA…VNEG), 262 to 341 (YDLR…VDAG), and 344 to 418 (LTVR…VKER).

This sequence belongs to the BamA family. In terms of assembly, part of the Bam complex.

The protein resides in the cell outer membrane. Its function is as follows. Part of the outer membrane protein assembly complex, which is involved in assembly and insertion of beta-barrel proteins into the outer membrane. The protein is Outer membrane protein assembly factor BamA of Haemophilus influenzae.